The chain runs to 575 residues: Sulfite reductase [NADPH] hemoprotein beta-component (575 aa).

[4Fe-4S] cluster contacts are provided by C439, C445, C484, and C488. Residue C488 participates in siroheme binding.

Belongs to the nitrite and sulfite reductase 4Fe-4S domain family. As to quaternary structure, alpha(8)-beta(8). The alpha component is a flavoprotein, the beta component is a hemoprotein. Siroheme is required as a cofactor. Requires [4Fe-4S] cluster as cofactor.

The catalysed reaction is hydrogen sulfide + 3 NADP(+) + 3 H2O = sulfite + 3 NADPH + 4 H(+). Its pathway is sulfur metabolism; hydrogen sulfide biosynthesis; hydrogen sulfide from sulfite (NADPH route): step 1/1. Its function is as follows. Component of the sulfite reductase complex that catalyzes the 6-electron reduction of sulfite to sulfide. This is one of several activities required for the biosynthesis of L-cysteine from sulfate. This Blochmanniella pennsylvanica (strain BPEN) protein is Sulfite reductase [NADPH] hemoprotein beta-component.